The following is a 395-amino-acid chain: Transmembrane protein 79 (395 aa).

The segment at methionine 1 to glutamate 115 is disordered. The Cytoplasmic segment spans residues methionine 1–serine 204. A helical transmembrane segment spans residues valine 205–phenylalanine 225. Residues aspartate 226 to glycine 244 are Extracellular-facing. The helical transmembrane segment at valine 245 to phenylalanine 265 threads the bilayer. Topologically, residues alanine 266–glutamine 290 are cytoplasmic. The chain crosses the membrane as a helical span at residues leucine 291–leucine 311. Residues lysine 312–leucine 313 are Extracellular-facing. The helical transmembrane segment at leucine 314–valine 334 threads the bilayer. Over glycine 335–tyrosine 343 the chain is Cytoplasmic. The helical transmembrane segment at glycine 344–valine 364 threads the bilayer. Over glutamate 365 to glycine 395 the chain is Extracellular.

Its subcellular location is the lysosome. The protein resides in the golgi apparatus. It localises to the trans-Golgi network. The protein localises to the membrane. Its function is as follows. Contributes to the epidermal integrity and skin barrier function. Plays a role in the lamellar granule (LG) secretory system and in the stratum corneum (SC) epithelial cell formation. The polypeptide is Transmembrane protein 79 (TMEM79) (Bos taurus (Bovine)).